Consider the following 490-residue polypeptide: Sushi domain-containing protein 4 (490 aa).

Positions 1–21 (MYHGMNPSNGDGFLEQQQQQQ) are disordered. Positions 1–41 (MYHGMNPSNGDGFLEQQQQQQQPQSPQRLLAVILWFQLALC) are cleaved as a signal peptide. The Extracellular segment spans residues 42-319 (FGPAQLTGGF…PSTHETLLTT (278 aa)). Sushi domains lie at 55 to 119 (QVCA…ICVQ), 120 to 179 (EDCR…ICQG), 178 to 239 (QGCL…RCLA), and 241 to 304 (EVCP…YCIK). 8 disulfide bridges follow: C57–C99, C85–C117, C122–C165, C147–C177, C180–C224, C210–C237, C243–C289, and C274–C302. Residues N104 and N134 are each glycosylated (N-linked (GlcNAc...) asparagine). A glycan (N-linked (GlcNAc...) asparagine) is linked at N192. The helical transmembrane segment at 320–340 (WKIVAFTATSVLLVLLLVILA) threads the bilayer. The Cytoplasmic portion of the chain corresponds to 341–490 (RMFQTKFKAH…DEIPLMEEDP (150 aa)). The interval 401-490 (GCPLPVDDQS…DEIPLMEEDP (90 aa)) is disordered. Polar residues predominate over residues 430–456 (CDSVSGSSELLQSLYSPPRCQESTHPA). Acidic residues predominate over residues 479–490 (IADEIPLMEEDP).

Isoform 3 is the predominant isoform in all tissues except cortex, cerebellum, kidney, and breast. Isoform 1 is found primarily in the esophagus and the brain.

It localises to the membrane. It is found in the secreted. Acts as a complement inhibitor by disrupting the formation of the classical C3 convertase. Isoform 3 inhibits the classical complement pathway, while membrane-bound isoform 1 inhibits deposition of C3b via both the classical and alternative complement pathways. The sequence is that of Sushi domain-containing protein 4 (SUSD4) from Homo sapiens (Human).